A 447-amino-acid chain; its full sequence is SPARC-related modular calcium-binding protein 2 (447 aa).

The signal sequence occupies residues 1-21 (MLPPQLCWLPLLAALLPPVPA). Residues 34–86 (QDKDRDCSLDCPSSPQKPLCASDGRTFLSRCEFQRAKCKDPQLEIAHRGNCKD) form the Kazal-like domain. Disulfide bonds link cysteine 40–cysteine 71, cysteine 44–cysteine 64, cysteine 53–cysteine 84, cysteine 90–cysteine 113, cysteine 124–cysteine 131, and cysteine 133–cysteine 153. Residues 87–153 (VSRCVAERKY…TAVAHKTPRC (67 aa)) enclose the Thyroglobulin type-1 1 domain. A disordered region spans residues 147–230 (AHKTPRCPGS…QSALEEAKQP (84 aa)). The span at 161 to 172 (VPQREGAGKADD) shows a compositional bias: basic and acidic residues. Asparagine 206 carries an N-linked (GlcNAc...) asparagine glycan. Residues 206–216 (NKTNKNSASSC) are compositionally biased toward polar residues. Positions 213–281 (ASSCDQEHQS…TSTRYEQPKC (69 aa)) constitute a Thyroglobulin type-1 2 domain. Disulfide bonds link cysteine 216–cysteine 240, cysteine 251–cysteine 258, and cysteine 260–cysteine 281. The span at 217 to 230 (DQEHQSALEEAKQP) shows a compositional bias: basic and acidic residues. EF-hand domains follow at residues 347 to 382 (LEER…LRKK) and 384 to 419 (KPKK…TREE). The Ca(2+) site is built by aspartate 360, asparagine 362, serine 364, aspartate 366, glutamate 371, aspartate 397, asparagine 399, aspartate 401, serine 403, and glutamate 408. N-linked (GlcNAc...) asparagine glycosylation is present at asparagine 362. Residues 416-447 (TREEGKANTRKRHTPRGNAESSSSNRQPRKQG) are disordered.

Binds various proteins from the extracellular matrix. In terms of processing, N-glycosylated. In terms of tissue distribution, strongly expressed in ovary, followed by heart, muscle, spleen, brain, thymus, lung, liver, kidney, spleen, testis, ovary and skeletal muscle.

It localises to the secreted. It is found in the extracellular space. The protein localises to the extracellular matrix. Its subcellular location is the basement membrane. Its function is as follows. Can stimulate endothelial cell proliferation, migration, as well as angiogenesis. Promotes matrix assembly and cell adhesiveness. This Mus musculus (Mouse) protein is SPARC-related modular calcium-binding protein 2 (Smoc2).